We begin with the raw amino-acid sequence, 557 residues long: Urocanate hydratase (557 aa).

NAD(+) contacts are provided by residues 53–54 (GG), Gln131, 177–179 (GMG), Glu197, Arg202, 243–244 (NA), 264–268 (QTSAH), 274–275 (YL), and Tyr323. Cys411 is an active-site residue. The tract at residues 445–464 (LDSGSVSSPNRETESMRDGS) is disordered. Positions 455–464 (RETESMRDGS) are enriched in basic and acidic residues. Gly493 is an NAD(+) binding site.

It belongs to the urocanase family. NAD(+) is required as a cofactor.

The protein localises to the cytoplasm. The enzyme catalyses 4-imidazolone-5-propanoate = trans-urocanate + H2O. It functions in the pathway amino-acid degradation; L-histidine degradation into L-glutamate; N-formimidoyl-L-glutamate from L-histidine: step 2/3. Catalyzes the conversion of urocanate to 4-imidazolone-5-propionate. The polypeptide is Urocanate hydratase (Pseudomonas putida (strain W619)).